A 71-amino-acid polypeptide reads, in one-letter code: DNA-directed RNA polymerases I, II, and III subunit RPABC5 (71 aa).

4 residues coordinate Zn(2+): cysteine 7, cysteine 10, cysteine 44, and cysteine 45.

This sequence belongs to the archaeal Rpo10/eukaryotic RPB10 RNA polymerase subunit family. As to quaternary structure, component of the RNA polymerase I (Pol I), RNA polymerase II (Pol II) and RNA polymerase III (Pol III) complexes consisting of at least 13, 12 and 17 subunits, respectively.

Its subcellular location is the nucleus. In terms of biological role, DNA-dependent RNA polymerase catalyzes the transcription of DNA into RNA using the four ribonucleoside triphosphates as substrates. Common component of RNA polymerases I, II and III which synthesize ribosomal RNA precursors, mRNA precursors and many functional non-coding RNAs, and a small RNAs, such as 5S rRNA and tRNAs, respectively. Pol II is the central component of the basal RNA polymerase II transcription machinery. Pols are composed of mobile elements that move relative to each other. In Pol II, RBP10 is part of the core element with the central large cleft. The protein is DNA-directed RNA polymerases I, II, and III subunit RPABC5 of Brassica napus (Rape).